Reading from the N-terminus, the 570-residue chain is Glutamate--tRNA ligase, chloroplastic/mitochondrial (570 aa).

The transit peptide at 1–39 directs the protein to the chloroplast and mitochondrion; that stretch reads MASLVYGTPWLRVRSLPELAPAFLRRRQSSLFYCSRRSF. 57–59 provides a ligand contact to L-glutamate; that stretch reads RFA. A 'HIGH' region motif is present at residues 60-70; sequence PSPTGNLHVGG. Residue H67 participates in ATP binding. L-glutamate contacts are provided by residues E93, 245 to 249, and R263; that span reads YNFCV. Residues E266 and 301 to 305 contribute to the ATP site; that span reads KLSKR. The 'KMSKS' region motif lies at 301 to 305; sequence KLSKR.

Belongs to the class-I aminoacyl-tRNA synthetase family. Glutamate--tRNA ligase type 1 subfamily.

The protein localises to the plastid. Its subcellular location is the chloroplast. The protein resides in the mitochondrion. It catalyses the reaction tRNA(Glu) + L-glutamate + ATP = L-glutamyl-tRNA(Glu) + AMP + diphosphate. Functionally, catalyzes the attachment of glutamate to tRNA(Glu) in a two-step reaction: glutamate is first activated by ATP to form Glu-AMP and then transferred to the acceptor end of tRNA(Glu). The protein is Glutamate--tRNA ligase, chloroplastic/mitochondrial of Arabidopsis thaliana (Mouse-ear cress).